Here is a 106-residue protein sequence, read N- to C-terminus: Iron-sulfur cluster assembly protein CyaY (106 aa).

This sequence belongs to the frataxin family.

Involved in iron-sulfur (Fe-S) cluster assembly. May act as a regulator of Fe-S biogenesis. The polypeptide is Iron-sulfur cluster assembly protein CyaY (Salmonella arizonae (strain ATCC BAA-731 / CDC346-86 / RSK2980)).